We begin with the raw amino-acid sequence, 453 residues long: Anthocyanidin 3-O-glucosyltransferase (453 aa).

The active-site Proton acceptor is His17. Residue His17 participates in an anthocyanidin binding. Asp117 functions as the Charge relay in the catalytic mechanism. Thr139 contributes to the UDP-alpha-D-glucose binding site. His148 is an an anthocyanidin binding site. UDP-alpha-D-glucose-binding residues include Ala331, Gln333, His348, Trp351, Asn352, Ser353, and Glu356. Position 371 (Gly371) interacts with an anthocyanidin. Positions 372 and 373 each coordinate UDP-alpha-D-glucose.

The protein belongs to the UDP-glycosyltransferase family.

It carries out the reaction an anthocyanidin + UDP-alpha-D-glucose + H(+) = an anthocyanidin 3-O-beta-D-glucoside + UDP. The enzyme catalyses delphinidin + UDP-alpha-D-glucose = delphinidin 3-O-beta-D-glucoside + UDP. It catalyses the reaction pelargonidin + UDP-alpha-D-glucose = pelargonidin 3-O-beta-D-glucoside + UDP. The catalysed reaction is cyanidin + UDP-alpha-D-glucose = cyanidin 3-O-beta-D-glucoside + UDP + H(+). Its pathway is pigment biosynthesis; anthocyanin biosynthesis. In the presence of other necessary color factors, this glycosylation reaction allows the accumulation of anthocyanin pigments. Anthocyanidins are the preferred substrates, while flavonols are only a minor substrate in vitro. This chain is Anthocyanidin 3-O-glucosyltransferase, found in Gentiana triflora (Clustered gentian).